A 306-amino-acid chain; its full sequence is tRNA dimethylallyltransferase (306 aa).

Glycine 11–serine 18 contacts ATP. Threonine 13–serine 18 contributes to the substrate binding site. Positions aspartate 35–glutamine 38 are interaction with substrate tRNA.

It belongs to the IPP transferase family. In terms of assembly, monomer. Mg(2+) serves as cofactor.

The enzyme catalyses adenosine(37) in tRNA + dimethylallyl diphosphate = N(6)-dimethylallyladenosine(37) in tRNA + diphosphate. In terms of biological role, catalyzes the transfer of a dimethylallyl group onto the adenine at position 37 in tRNAs that read codons beginning with uridine, leading to the formation of N6-(dimethylallyl)adenosine (i(6)A). This is tRNA dimethylallyltransferase from Borreliella burgdorferi (strain ZS7) (Borrelia burgdorferi).